A 69-amino-acid chain; its full sequence is Cytochrome c oxidase subunit 8A, mitochondrial (69 aa).

Residues methionine 1–arginine 25 constitute a mitochondrion transit peptide. Residues serine 2–leucine 19 carry the SIFI-degron motif. At valine 26–glycine 36 the chain is on the mitochondrial matrix side. Residues threonine 37–serine 60 traverse the membrane as a helical segment. Topologically, residues histidine 61 to glutamate 69 are mitochondrial intermembrane.

This sequence belongs to the cytochrome c oxidase VIII family. In terms of assembly, component of the cytochrome c oxidase (complex IV, CIV), a multisubunit enzyme composed of 14 subunits. The complex is composed of a catalytic core of 3 subunits MT-CO1, MT-CO2 and MT-CO3, encoded in the mitochondrial DNA, and 11 supernumerary subunits COX4I, COX5A, COX5B, COX6A, COX6B, COX6C, COX7A, COX7B, COX7C, COX8 and NDUFA4, which are encoded in the nuclear genome. The complex exists as a monomer or a dimer and forms supercomplexes (SCs) in the inner mitochondrial membrane with NADH-ubiquinone oxidoreductase (complex I, CI) and ubiquinol-cytochrome c oxidoreductase (cytochrome b-c1 complex, complex III, CIII), resulting in different assemblies (supercomplex SCI(1)III(2)IV(1) and megacomplex MCI(2)III(2)IV(2)). In response to mitochondrial stress, the precursor protein is ubiquitinated by the SIFI complex in the cytoplasm before mitochondrial import, leading to its degradation. Within the SIFI complex, UBR4 initiates ubiquitin chain that are further elongated or branched by KCMF1.

It localises to the mitochondrion inner membrane. Its pathway is energy metabolism; oxidative phosphorylation. Component of the cytochrome c oxidase, the last enzyme in the mitochondrial electron transport chain which drives oxidative phosphorylation. The respiratory chain contains 3 multisubunit complexes succinate dehydrogenase (complex II, CII), ubiquinol-cytochrome c oxidoreductase (cytochrome b-c1 complex, complex III, CIII) and cytochrome c oxidase (complex IV, CIV), that cooperate to transfer electrons derived from NADH and succinate to molecular oxygen, creating an electrochemical gradient over the inner membrane that drives transmembrane transport and the ATP synthase. Cytochrome c oxidase is the component of the respiratory chain that catalyzes the reduction of oxygen to water. Electrons originating from reduced cytochrome c in the intermembrane space (IMS) are transferred via the dinuclear copper A center (CU(A)) of subunit 2 and heme A of subunit 1 to the active site in subunit 1, a binuclear center (BNC) formed by heme A3 and copper B (CU(B)). The BNC reduces molecular oxygen to 2 water molecules using 4 electrons from cytochrome c in the IMS and 4 protons from the mitochondrial matrix. This chain is Cytochrome c oxidase subunit 8A, mitochondrial (COX8A), found in Nycticebus coucang (Slow loris).